Reading from the N-terminus, the 550-residue chain is Arginine--tRNA ligase (550 aa).

The 'HIGH' region motif lies at Ala-130–Gly-140.

It belongs to the class-I aminoacyl-tRNA synthetase family. Monomer.

Its subcellular location is the cytoplasm. It catalyses the reaction tRNA(Arg) + L-arginine + ATP = L-arginyl-tRNA(Arg) + AMP + diphosphate. The sequence is that of Arginine--tRNA ligase from Mycolicibacterium gilvum (strain PYR-GCK) (Mycobacterium gilvum (strain PYR-GCK)).